Here is a 240-residue protein sequence, read N- to C-terminus: Ribonuclease PH (240 aa).

Phosphate is bound by residues Arg-87 and 125–127; that span reads GTR.

The protein belongs to the RNase PH family. In terms of assembly, homohexameric ring arranged as a trimer of dimers.

It catalyses the reaction tRNA(n+1) + phosphate = tRNA(n) + a ribonucleoside 5'-diphosphate. Phosphorolytic 3'-5' exoribonuclease that plays an important role in tRNA 3'-end maturation. Removes nucleotide residues following the 3'-CCA terminus of tRNAs; can also add nucleotides to the ends of RNA molecules by using nucleoside diphosphates as substrates, but this may not be physiologically important. Probably plays a role in initiation of 16S rRNA degradation (leading to ribosome degradation) during starvation. This Pseudomonas syringae pv. syringae (strain B728a) protein is Ribonuclease PH.